Reading from the N-terminus, the 494-residue chain is DBIRD complex subunit ZNF326 (494 aa).

3 disordered regions span residues 1–22, 147–170, and 202–264; these read MDREYGSYNQRSVNSYGNQSFS, AFGGRSNDAFGGPSKGRGRGRGQM, and KMAP…NSEK. The segment covering 7-22 has biased composition (polar residues); the sequence is SYNQRSVNSYGNQSFS. Residues 200-221 carry the Bipartite nuclear localization signal motif; it reads KRKMAPPFKPVGFFGKKQKLSK. 2 consecutive C2H2 AKAP95-type zinc fingers follow at residues 273–295 and 365–388; these read CSFCKFRSFDEKGIEEHLTSATH and CSACSVYVPALHSSVQLHLKSADH. Residues 429–494 are disordered; it reads PFETQPDEQQ…CDPLTTTDEV (66 aa). The segment covering 433 to 451 has biased composition (acidic residues); it reads QPDEQQQEQEEEEEEEEQQ.

This sequence belongs to the AKAP95 family. In terms of assembly, component of the DBIRD complex.

It localises to the nucleus. In terms of biological role, core component of the DBIRD complex, a multiprotein complex that acts at the interface between core mRNP particles and RNA polymerase II (RNAPII) and integrates transcript elongation with the regulation of alternative splicing. This Xenopus laevis (African clawed frog) protein is DBIRD complex subunit ZNF326 (znf326).